We begin with the raw amino-acid sequence, 277 residues long: NH(3)-dependent NAD(+) synthetase (277 aa).

36–43 serves as a coordination point for ATP; sequence GLSGGIDS. Residue D42 participates in Mg(2+) binding. Position 118 (R118) interacts with deamido-NAD(+). Residue T138 coordinates ATP. E143 serves as a coordination point for Mg(2+). Residues K167 and S189 each contribute to the ATP site.

This sequence belongs to the NAD synthetase family. Homodimer.

It catalyses the reaction deamido-NAD(+) + NH4(+) + ATP = AMP + diphosphate + NAD(+) + H(+). The protein operates within cofactor biosynthesis; NAD(+) biosynthesis; NAD(+) from deamido-NAD(+) (ammonia route): step 1/1. Functionally, catalyzes the ATP-dependent amidation of deamido-NAD to form NAD. Uses ammonia as a nitrogen source. The chain is NH(3)-dependent NAD(+) synthetase from Chlorobium phaeobacteroides (strain BS1).